A 106-amino-acid polypeptide reads, in one-letter code: PAT complex subunit Asterix (106 aa).

Positions M1–L29 are disordered. S2 carries the N-acetylserine modification. Residues S2–P32 are Cytoplasmic-facing. The helical transmembrane segment at T33–L51 threads the bilayer. A topological domain (lumenal) is located at residue K52. The chain crosses the membrane as a helical span at residues L53 to N70. Over S71 to S74 the chain is Cytoplasmic. Residues E75–Y95 form a helical membrane-spanning segment. Residues L96–W106 are Lumenal-facing.

This sequence belongs to the Asterix family. Component of the PAT complex, composed of WDR83OS/Asterix and CCDC47. The PAT complex is part of the multi-pass translocon (MPT) complex, composed of three subcomplexes, the GEL complex (composed of RAB5IF/OPTI and TMCO1), the BOS complex (composed of NCLN/Nicalin, NOMO1 and TMEM147) and the PAT complex (composed of WDR83OS/Asterix and CCDC47). The MPT complex associates with the SEC61 complex.

The protein localises to the endoplasmic reticulum membrane. In terms of biological role, component of the multi-pass translocon (MPT) complex that mediates insertion of multi-pass membrane proteins into the lipid bilayer of membranes. The MPT complex takes over after the SEC61 complex: following membrane insertion of the first few transmembrane segments of proteins by the SEC61 complex, the MPT complex occludes the lateral gate of the SEC61 complex to promote insertion of subsequent transmembrane regions. Within the MPT complex, the PAT subcomplex sequesters any highly polar regions in the transmembrane domains away from the non-polar membrane environment until they can be buried in the interior of the fully assembled protein. Within the PAT subcomplex, WDR83OS/Asterix binds to and redirects the substrate to a location behind the SEC61 complex. The sequence is that of PAT complex subunit Asterix (WDR83OS) from Canis lupus familiaris (Dog).